Here is an 83-residue protein sequence, read N- to C-terminus: AGDAAAGEDKIGTCVACHGTDGQGLAPIYPNLTGQSATYLESSIKAYRDGQRKGGNAALMTPMAQGLSDEDIADIAAYYSSQE.

Heme c is bound by residues Cys14, Cys17, His18, and Met63.

As to quaternary structure, homodimer. In terms of processing, binds 1 heme c group covalently per subunit.

The protein is Cytochrome c-554(548) of Halomonas halodenitrificans (strain ATCC 12084 / NCIMB 8669) (Paracoccus halodenitrificans).